The sequence spans 277 residues: Diaminopimelate epimerase (277 aa).

Substrate contacts are provided by asparagine 13, glutamine 46, and asparagine 66. The active-site Proton donor is the cysteine 75. Substrate-binding positions include 76–77 (GN), asparagine 160, asparagine 193, and 211–212 (ER). Cysteine 220 functions as the Proton acceptor in the catalytic mechanism. 221–222 (GS) is a binding site for substrate.

This sequence belongs to the diaminopimelate epimerase family. In terms of assembly, homodimer.

It localises to the cytoplasm. It carries out the reaction (2S,6S)-2,6-diaminopimelate = meso-2,6-diaminopimelate. It functions in the pathway amino-acid biosynthesis; L-lysine biosynthesis via DAP pathway; DL-2,6-diaminopimelate from LL-2,6-diaminopimelate: step 1/1. Its function is as follows. Catalyzes the stereoinversion of LL-2,6-diaminopimelate (L,L-DAP) to meso-diaminopimelate (meso-DAP), a precursor of L-lysine and an essential component of the bacterial peptidoglycan. The protein is Diaminopimelate epimerase of Legionella pneumophila (strain Lens).